A 145-amino-acid polypeptide reads, in one-letter code: Large ribosomal subunit protein uL16 (145 aa).

The segment covering 1-17 has biased composition (basic residues); it reads MLMPKRVKHRRVHRGRM. Residues 1 to 22 are disordered; the sequence is MLMPKRVKHRRVHRGRMTGKAT.

The protein belongs to the universal ribosomal protein uL16 family. As to quaternary structure, part of the 50S ribosomal subunit.

In terms of biological role, binds 23S rRNA and is also seen to make contacts with the A and possibly P site tRNAs. In Ruminiclostridium cellulolyticum (strain ATCC 35319 / DSM 5812 / JCM 6584 / H10) (Clostridium cellulolyticum), this protein is Large ribosomal subunit protein uL16.